We begin with the raw amino-acid sequence, 368 residues long: Glutamate 5-kinase (368 aa).

Lysine 15 lines the ATP pocket. Substrate-binding residues include serine 55, aspartate 143, and asparagine 155. Residues 175–176 (SD) and 217–223 (SGGMVSK) contribute to the ATP site. The PUA domain occupies 277 to 354 (EGRLTIDAGA…DAQEAALGYA (78 aa)).

The protein belongs to the glutamate 5-kinase family.

Its subcellular location is the cytoplasm. It catalyses the reaction L-glutamate + ATP = L-glutamyl 5-phosphate + ADP. It functions in the pathway amino-acid biosynthesis; L-proline biosynthesis; L-glutamate 5-semialdehyde from L-glutamate: step 1/2. Catalyzes the transfer of a phosphate group to glutamate to form L-glutamate 5-phosphate. The sequence is that of Glutamate 5-kinase from Sphingopyxis alaskensis (strain DSM 13593 / LMG 18877 / RB2256) (Sphingomonas alaskensis).